A 397-amino-acid chain; its full sequence is L-asparaginase-like protein GD25160 (397 aa).

A signal peptide spans 1 to 22 (MLAQSCCLRLLILLLLFTSICS). 3 disulfide bridges follow: C90/C95, C189/C205, and C344/C371.

The protein belongs to the Ntn-hydrolase family.

The protein is L-asparaginase-like protein GD25160 of Drosophila simulans (Fruit fly).